A 163-amino-acid polypeptide reads, in one-letter code: Disulfide bond formation protein B (163 aa).

The Cytoplasmic portion of the chain corresponds to 1–9; sequence MKKLTYRKI. The helical transmembrane segment at 10–26 threads the bilayer; sequence QSFQAIITVLVIFASFY. Residues 27 to 44 are Periplasmic-facing; that stretch reads LEYAAGLQPCPLCLMQRV. A disulfide bond links cysteine 36 and cysteine 39. The helical transmembrane segment at 45–58 threads the bilayer; sequence CVFILLGLMGVSLG. The Cytoplasmic segment spans residues 59 to 64; that stretch reads TVKKAH. Residues 65-82 traverse the membrane as a helical segment; it reads IVSLIQFQVACAGLYFSL. Residues 83–139 lie on the Periplasmic side of the membrane; the sequence is RQLWLQSLPSDQAPACMPGLDVLIQYFPWQTVAKALFWGAGDCAEVTWTMFGVSMPG. A disulfide bridge links cysteine 98 with cysteine 125. A helical transmembrane segment spans residues 140 to 158; it reads WAAMYFLSMAIMGLFLFFR. Residues 159-163 lie on the Cytoplasmic side of the membrane; sequence TRTIN.

This sequence belongs to the DsbB family.

Its subcellular location is the cell inner membrane. Its function is as follows. Required for disulfide bond formation in some periplasmic proteins. Acts by oxidizing the DsbA protein. This Legionella pneumophila (strain Lens) protein is Disulfide bond formation protein B.